The sequence spans 161 residues: Protein-export protein SecB (161 aa).

This sequence belongs to the SecB family. Homotetramer, a dimer of dimers. One homotetramer interacts with 1 SecA dimer.

The protein localises to the cytoplasm. One of the proteins required for the normal export of preproteins out of the cell cytoplasm. It is a molecular chaperone that binds to a subset of precursor proteins, maintaining them in a translocation-competent state. It also specifically binds to its receptor SecA. The sequence is that of Protein-export protein SecB from Shewanella sp. (strain MR-7).